The sequence spans 827 residues: Putative transcriptional regulatory protein C16G5.16 (827 aa).

The zn(2)-C6 fungal-type DNA-binding region spans 16-42 (CDECHRRKIKCDQRRPCSNCIAYNYEC). 3 disordered regions span residues 80 to 114 (LKLP…SSQD), 158 to 193 (TVPN…HKKP), and 794 to 827 (QPPS…KRTE). A compositionally biased stretch (basic and acidic residues) spans 102–112 (KRSDSSKRSSS). Position 112 is a phosphoserine (Ser-112). Low complexity-rich tracts occupy residues 159-179 (VPNP…LSFP) and 811-827 (SNNS…KRTE).

It belongs to the ASG1 family.

The protein localises to the cytoplasm. The protein resides in the nucleus. This is Putative transcriptional regulatory protein C16G5.16 from Schizosaccharomyces pombe (strain 972 / ATCC 24843) (Fission yeast).